Reading from the N-terminus, the 293-residue chain is GDT1-like protein 3 (293 aa).

The N-terminal stretch at 1–25 (MGLISNPTRLILVATIFFLVSSISG) is a signal peptide. Transmembrane regions (helical) follow at residues 89–109 (FSMI…ALMA), 115–135 (ATVL…STGL), 148–168 (TNSA…YIAW), 200–220 (LFSR…FLAE), 238–258 (AIGV…LAVV), and 272–292 (VATV…FYPP).

Belongs to the GDT1 family.

The protein localises to the membrane. This is GDT1-like protein 3 from Arabidopsis thaliana (Mouse-ear cress).